Consider the following 145-residue polypeptide: Transcription factor MEE8 (145 aa).

Residues 33-49 (EKGVEKVGQKRSAESRR) show a composition bias toward basic and acidic residues. A disordered region spans residues 33 to 61 (EKGVEKVGQKRSAESRREGKKKRVKTQCV). Residues 66-115 (DKSDHDTLLKKKRRERIRRQLETLKEITPNCPQSDINAILDCVIEYTNNL) enclose the bHLH domain.

As to quaternary structure, homodimer.

It is found in the nucleus. Required during early embryo development, for the endosperm formation. This chain is Transcription factor MEE8 (MEE8), found in Arabidopsis thaliana (Mouse-ear cress).